Consider the following 116-residue polypeptide: Large ribosomal subunit protein uL18 (116 aa).

Belongs to the universal ribosomal protein uL18 family. Part of the 50S ribosomal subunit; part of the 5S rRNA/L5/L18/L25 subcomplex. Contacts the 5S and 23S rRNAs.

In terms of biological role, this is one of the proteins that bind and probably mediate the attachment of the 5S RNA into the large ribosomal subunit, where it forms part of the central protuberance. This Shewanella amazonensis (strain ATCC BAA-1098 / SB2B) protein is Large ribosomal subunit protein uL18.